The primary structure comprises 65 residues: Large ribosomal subunit protein bL35 (65 aa).

It belongs to the bacterial ribosomal protein bL35 family.

This Buchnera aphidicola subsp. Acyrthosiphon pisum (strain 5A) protein is Large ribosomal subunit protein bL35.